The chain runs to 209 residues: Large ribosomal subunit protein uL3 (209 aa).

Residues arginine 141 to glycine 163 form a disordered region.

It belongs to the universal ribosomal protein uL3 family. In terms of assembly, part of the 50S ribosomal subunit. Forms a cluster with proteins L14 and L19.

Its function is as follows. One of the primary rRNA binding proteins, it binds directly near the 3'-end of the 23S rRNA, where it nucleates assembly of the 50S subunit. This Clostridium botulinum (strain Langeland / NCTC 10281 / Type F) protein is Large ribosomal subunit protein uL3.